Consider the following 247-residue polypeptide: Phosphoribosylaminoimidazole-succinocarboxamide synthase (247 aa).

This sequence belongs to the SAICAR synthetase family.

It carries out the reaction 5-amino-1-(5-phospho-D-ribosyl)imidazole-4-carboxylate + L-aspartate + ATP = (2S)-2-[5-amino-1-(5-phospho-beta-D-ribosyl)imidazole-4-carboxamido]succinate + ADP + phosphate + 2 H(+). It participates in purine metabolism; IMP biosynthesis via de novo pathway; 5-amino-1-(5-phospho-D-ribosyl)imidazole-4-carboxamide from 5-amino-1-(5-phospho-D-ribosyl)imidazole-4-carboxylate: step 1/2. The polypeptide is Phosphoribosylaminoimidazole-succinocarboxamide synthase (Synechococcus sp. (strain JA-2-3B'a(2-13)) (Cyanobacteria bacterium Yellowstone B-Prime)).